The following is a 556-amino-acid chain: DNA ligase B (556 aa).

Residue Lys-122 is the N6-AMP-lysine intermediate of the active site.

The protein belongs to the NAD-dependent DNA ligase family. LigB subfamily.

It catalyses the reaction NAD(+) + (deoxyribonucleotide)n-3'-hydroxyl + 5'-phospho-(deoxyribonucleotide)m = (deoxyribonucleotide)n+m + AMP + beta-nicotinamide D-nucleotide.. Its function is as follows. Catalyzes the formation of phosphodiester linkages between 5'-phosphoryl and 3'-hydroxyl groups in double-stranded DNA using NAD as a coenzyme and as the energy source for the reaction. This is DNA ligase B from Enterobacter sp. (strain 638).